A 142-amino-acid polypeptide reads, in one-letter code: Hemoglobin subunit alpha-I/II (142 aa).

In terms of domain architecture, Globin spans 2–142 (VLSAADKGNV…VSTVLTSKYR (141 aa)). Ser4 carries the post-translational modification Phosphoserine. N6-succinyllysine is present on residues Lys8 and Lys12. The residue at position 17 (Lys17) is an N6-acetyllysine; alternate. Position 17 is an N6-succinyllysine; alternate (Lys17). Tyr25 is subject to Phosphotyrosine. Residue Ser36 is modified to Phosphoserine. Lys41 is subject to N6-succinyllysine. At Ser50 the chain carries Phosphoserine. His59 contacts O2. His88 provides a ligand contact to heme b. Ser103 carries the phosphoserine modification. A Phosphothreonine modification is found at Thr109. A Phosphoserine modification is found at Ser125. Residues Thr135 and Thr138 each carry the phosphothreonine modification. The residue at position 139 (Ser139) is a Phosphoserine.

It belongs to the globin family. In terms of assembly, heterotetramer of two alpha chains and two beta chains. Red blood cells.

In terms of biological role, involved in oxygen transport from the lung to the various peripheral tissues. In Bison bonasus (European bison), this protein is Hemoglobin subunit alpha-I/II.